The primary structure comprises 868 residues: Translation initiation factor IF-2 (868 aa).

The segment covering arginine 103–valine 183 has biased composition (basic and acidic residues). The interval arginine 103–lysine 274 is disordered. The segment covering valine 190–arginine 207 has biased composition (pro residues). The segment covering proline 213–lysine 254 has biased composition (basic and acidic residues). Basic residues predominate over residues glycine 255 to threonine 264. One can recognise a tr-type G domain in the interval proline 369 to lysine 538. The tract at residues glycine 378–threonine 385 is G1. Glycine 378–threonine 385 contributes to the GTP binding site. A G2 region spans residues glycine 403 to histidine 407. The segment at aspartate 424–glycine 427 is G3. GTP contacts are provided by residues aspartate 424–histidine 428 and asparagine 478–aspartate 481. Residues asparagine 478 to aspartate 481 are G4. The interval serine 514–lysine 516 is G5.

This sequence belongs to the TRAFAC class translation factor GTPase superfamily. Classic translation factor GTPase family. IF-2 subfamily.

The protein resides in the cytoplasm. Functionally, one of the essential components for the initiation of protein synthesis. Protects formylmethionyl-tRNA from spontaneous hydrolysis and promotes its binding to the 30S ribosomal subunits. Also involved in the hydrolysis of GTP during the formation of the 70S ribosomal complex. This chain is Translation initiation factor IF-2, found in Methylococcus capsulatus (strain ATCC 33009 / NCIMB 11132 / Bath).